Here is a 364-residue protein sequence, read N- to C-terminus: Protein Wnt-16 (364 aa).

The signal sequence occupies residues 1 to 29 (MDRAALLALPSLCALWAAVLSLLPCGTQG). 3 cysteine pairs are disulfide-bonded: Cys-81/Cys-92, Cys-138/Cys-146, and Cys-148/Cys-167. N-linked (GlcNAc...) asparagine glycosylation is present at Asn-142. Asn-188 is a glycosylation site (N-linked (GlcNAc...) asparagine). Intrachain disulfides connect Cys-220–Cys-234, Cys-222–Cys-229, Cys-293–Cys-324, Cys-309–Cys-319, Cys-323–Cys-363, Cys-339–Cys-354, Cys-341–Cys-351, and Cys-346–Cys-347. Residue Ser-226 is the site of O-palmitoleoyl serine; by PORCN attachment. N-linked (GlcNAc...) asparagine glycosylation is present at Asn-310.

This sequence belongs to the Wnt family. In terms of processing, palmitoleoylation is required for efficient binding to frizzled receptors. Depalmitoleoylation leads to Wnt signaling pathway inhibition.

It localises to the secreted. It is found in the extracellular space. The protein resides in the extracellular matrix. Functionally, ligand for members of the frizzled family of seven transmembrane receptors. Probable developmental protein. May be a signaling molecule which affects the development of discrete regions of tissues. Is likely to signal over only few cell diameters. The sequence is that of Protein Wnt-16 (Wnt16) from Mus musculus (Mouse).